A 406-amino-acid polypeptide reads, in one-letter code: Argininosuccinate synthase (406 aa).

Residues 13 to 21 (AYSGGLDTS) and Ala-40 each bind ATP. L-citrulline-binding residues include Tyr-91 and Ser-96. Gly-121 contributes to the ATP binding site. L-aspartate-binding residues include Thr-123, Asn-127, and Asp-128. Asn-127 serves as a coordination point for L-citrulline. L-citrulline is bound by residues Arg-131, Ser-182, Ser-191, Glu-267, and Tyr-279.

The protein belongs to the argininosuccinate synthase family. Type 1 subfamily. In terms of assembly, homotetramer.

It is found in the cytoplasm. It carries out the reaction L-citrulline + L-aspartate + ATP = 2-(N(omega)-L-arginino)succinate + AMP + diphosphate + H(+). The protein operates within amino-acid biosynthesis; L-arginine biosynthesis; L-arginine from L-ornithine and carbamoyl phosphate: step 2/3. This Brucella anthropi (strain ATCC 49188 / DSM 6882 / CCUG 24695 / JCM 21032 / LMG 3331 / NBRC 15819 / NCTC 12168 / Alc 37) (Ochrobactrum anthropi) protein is Argininosuccinate synthase.